We begin with the raw amino-acid sequence, 141 residues long: Large ribosomal subunit protein bL17 (141 aa).

It belongs to the bacterial ribosomal protein bL17 family. Part of the 50S ribosomal subunit. Contacts protein L32.

In Allorhizobium ampelinum (strain ATCC BAA-846 / DSM 112012 / S4) (Agrobacterium vitis (strain S4)), this protein is Large ribosomal subunit protein bL17.